Consider the following 533-residue polypeptide: Lymphocyte cytosolic protein 2 (533 aa).

Residues 15-81 (WDPDSLADYF…INKNEERRSI (67 aa)) enclose the SAM domain. Tyr23 carries the post-translational modification Phosphotyrosine. The segment at 78 to 417 (RRSIFTRKPQ…PPSPAEEENS (340 aa)) is disordered. A compositionally biased stretch (acidic residues) spans 108-155 (FEEDDYESPNDDQDGEDDGDYESPNEEEEAPVEDDADYEPPPSNDEEA). Positions 184-213 (QQPPVPPQRPMAALPPPPAGRNHSPLPPPQ) are enriched in pro residues. Ser207 carries the post-translational modification Phosphoserine. Polar residues-rich tracts occupy residues 337-350 (MSSN…TKPS) and 365-376 (SESNSSFPQSAS). Phosphoserine is present on residues Ser376 and Ser410. Residues 400–411 (LPLPNKPRPPSP) show a composition bias toward pro residues. Positions 422-530 (WYVSYITRPE…RYQCTLTHAA (109 aa)) constitute an SH2 domain.

In terms of assembly, interacts with SLA. Interacts with CBLB. Interacts with GRB2. Interacts with SHB. Interacts with PRAM1. Interacts (via SH2 domain) with CD6 (via tyrosine phosphorylated C-terminus). Interacts with FYB1 and the phosphorylated form of FYB2. Interacts with 14-3-3 adapter/YWHAZ; this phosphorylation leads to YWHAZ proteolytic degradation. Interacts with VAV1; this interaction plays a role in TCR-mediated cytokine production. Interacts with AGER; this interaction plays an important role in AGER-mediated pro-inflammatory responses and cytokine release. In terms of processing, phosphorylated after T-cell receptor activation by ZAP70, ITK and TXK, which leads to the up-regulation of Th1 preferred cytokine IL-2. SYK-dependent phosphorylation is required for recruitment of PI3K signaling components. In terms of tissue distribution, highly expressed in spleen, thymus and peripheral blood leukocytes. Highly expressed also in T-cell and monocytic cell lines, expressed at lower level in B-cell lines. Not detected in fibroblast or neuroblastoma cell lines.

The protein resides in the cytoplasm. Adapter protein primarily involved in signaling pathways within T-cells, as well as other immune cells such as platelets, mast cells, and natural killer (NK) cells. Plays a crucial role for transducing signal from the T-cell receptor (TCR) after antigen recognition leading to T-cell activation. Mechanistically, once phosphorylated by the kinase ZAP70, mediates interactions with the guanine-nucleotide exchange factor VAV1, the adapter protein NCK and the kinase ITK. In turn, stimulates the activation of PKC-theta/PRKCQ and NF-kappa-B transcriptional activity in response to CD3 and CD28 costimulation. Also plays an essential role in AGER-induced signaling pathways including p38 MAPK and ERK1/2 activation leading to cytokine release and pro-inflammatory responses. This chain is Lymphocyte cytosolic protein 2 (LCP2), found in Homo sapiens (Human).